The following is a 90-amino-acid chain: NELL2-interacting cell ontogeny regulator 1 (90 aa).

An N-terminal signal peptide occupies residues Met1–Ala26.

This sequence belongs to the NICOL family.

It is found in the secreted. Functionally, mRNA-binding protein which interacts with a range of target mRNAs and may promote extracellular matrix production. The chain is NELL2-interacting cell ontogeny regulator 1 from Salmo salar (Atlantic salmon).